A 91-amino-acid polypeptide reads, in one-letter code: UPF0358 protein SAB0977 (91 aa).

The protein belongs to the UPF0358 family.

This Staphylococcus aureus (strain bovine RF122 / ET3-1) protein is UPF0358 protein SAB0977.